Consider the following 419-residue polypeptide: 2-amino-3-ketobutyrate coenzyme A ligase, mitochondrial (419 aa).

The transit peptide at 1–21 directs the protein to the mitochondrion; the sequence is MWAGRVLHAALSRAPRESRAQ. At K45 the chain carries N6-acetyllysine; alternate. The residue at position 45 (K45) is an N6-succinyllysine; alternate. 134–135 provides a ligand contact to pyridoxal 5'-phosphate; that stretch reads CF. H159 serves as a coordination point for substrate. An N6-acetyllysine; alternate modification is found at K187. K187 is modified (N6-succinyllysine; alternate). Pyridoxal 5'-phosphate contacts are provided by residues S206, 231 to 234, 262 to 265, and 295 to 296; these read DESH, TLGK, and SN. The residue at position 265 (K265) is an N6-(pyridoxal phosphate)lysine. Residues K326 and K368 each carry the N6-succinyllysine modification. An N6-acetyllysine; alternate modification is found at K383. K383 carries the post-translational modification N6-succinyllysine; alternate. R389 contributes to the substrate binding site.

The protein belongs to the class-II pyridoxal-phosphate-dependent aminotransferase family. Pyridoxal 5'-phosphate serves as cofactor.

Its subcellular location is the mitochondrion. The protein localises to the nucleus. The catalysed reaction is glycine + acetyl-CoA = (2S)-2-amino-3-oxobutanoate + CoA. It participates in amino-acid degradation; L-threonine degradation via oxydo-reductase pathway; glycine from L-threonine: step 2/2. In terms of biological role, pyridoxal phosphate (PLP) dependent enzyme, which catalyzes the cleavage of 2-amino-3-oxobutanoate to glycine and acetyl-CoA. Catalyzes the second reaction step on the main metabolic degradation pathway for L-threonine. The chain is 2-amino-3-ketobutyrate coenzyme A ligase, mitochondrial (GCAT) from Bos taurus (Bovine).